We begin with the raw amino-acid sequence, 513 residues long: ATP synthase subunit alpha (513 aa).

169 to 176 serves as a coordination point for ATP; it reads GDRQTGKT.

The protein belongs to the ATPase alpha/beta chains family. In terms of assembly, F-type ATPases have 2 components, CF(1) - the catalytic core - and CF(0) - the membrane proton channel. CF(1) has five subunits: alpha(3), beta(3), gamma(1), delta(1), epsilon(1). CF(0) has three main subunits: a(1), b(2) and c(9-12). The alpha and beta chains form an alternating ring which encloses part of the gamma chain. CF(1) is attached to CF(0) by a central stalk formed by the gamma and epsilon chains, while a peripheral stalk is formed by the delta and b chains.

It is found in the cell inner membrane. The catalysed reaction is ATP + H2O + 4 H(+)(in) = ADP + phosphate + 5 H(+)(out). Functionally, produces ATP from ADP in the presence of a proton gradient across the membrane. The alpha chain is a regulatory subunit. In Haemophilus influenzae (strain 86-028NP), this protein is ATP synthase subunit alpha.